A 530-amino-acid chain; its full sequence is T-complex protein 1 subunit zeta (530 aa).

Position 38 (G38) interacts with ADP. G38 serves as a coordination point for ATP. D89 lines the Mg(2+) pocket. Residues G90, T91, T92, S93, T157, K158, and A410 each contribute to the ADP site. ATP is bound by residues G90, T91, and T92. Residues A410, G411, D495, and K500 each coordinate ATP. D495 contacts ADP.

Component of the chaperonin-containing T-complex (TRiC), a hexadecamer composed of two identical back-to-back stacked rings enclosing a protein folding chamber. Each ring is made up of eight different subunits: TCP1/CCT1, CCT2, CCT3, CCT4, CCT5, CCT6A/CCT6, CCT7, CCT8. Interacts with PACRG.

The protein resides in the cytoplasm. It carries out the reaction ATP + H2O = ADP + phosphate + H(+). Its function is as follows. Component of the chaperonin-containing T-complex (TRiC), a molecular chaperone complex that assists the folding of actin, tubulin and other proteins upon ATP hydrolysis. This Gallus gallus (Chicken) protein is T-complex protein 1 subunit zeta.